The following is a 503-amino-acid chain: uncharacterized protein (503 aa).

This sequence belongs to the Mg-chelatase subunits D/I family. ComM subfamily.

This is an uncharacterized protein from Mycobacterium bovis (strain ATCC BAA-935 / AF2122/97).